We begin with the raw amino-acid sequence, 518 residues long: Ankyrin repeat and SOCS box protein 3 (518 aa).

11 ANK repeats span residues 9-38 (DTCSTVGLAAREGNVKVLRKLLKKGRSVDV), 42-71 (RGWMPIHEAAYHNSVECLQMLINADSSENY), 78-107 (EGFCALHLAASQGHWKIVQILLEAGADPNA), 111-140 (EETTPLFLAVENGQIDVLRLLLQHGANVNG), 145-174 (CGWNSLHQASFQENAEIIKLLLRKGANKEC), 178-207 (FGITPLFVAAQYGKLESLSILISSGANVNC), 211-240 (DKATPLFIAAQEGHTKCVELLLSSGADPDL), 246-275 (SWQLPIHAAAQMGHTKILDLLIPLTNRACD), 279-308 (NKVSPVYSAVFGGHEDCLEILLRNGYSPDA), 315-346 (GFSSPVCMAFQKDCEFFGIVNILLKYGAQINE), and 348-373 (HLAYCLKYEKFSIFRYFLRKGCSLGP). The SOCS box domain maps to 441–504 (MLSARASNAW…HNYLLYEDVL (64 aa)).

The protein belongs to the ankyrin SOCS box (ASB) family. Interacts with ELOB and TNFRSF1B.

The protein resides in the cytoplasm. The protein operates within protein modification; protein ubiquitination. Its function is as follows. Probable substrate-recognition component of a SCF-like ECS (Elongin-Cullin-SOCS-box protein) E3 ubiquitin-protein ligase complex which mediates the ubiquitination and subsequent proteasomal degradation of target proteins. Recognizes TNFRSF1B. Plays a role in the down-regulation of antiviral innate immunity by targeting MAVS for ubiquitin-proteasomal degradation. Also destabilizes TRAF6 by enhancing its 'Lys-48'-linked polyubiquitination. The polypeptide is Ankyrin repeat and SOCS box protein 3 (ASB3) (Homo sapiens (Human)).